We begin with the raw amino-acid sequence, 973 residues long: ATP-dependent DNA helicase Q5 (973 aa).

Residues 39 to 213 (MAVVKGDKDV…FAALHLKQPV (175 aa)) enclose the Helicase ATP-binding domain. 52-59 (MPTGAGKS) is a binding site for ATP. A DEAH box motif is present at residues 157 to 160 (DEAH). The Helicase C-terminal domain maps to 241-398 (NLRDFCLKAL…NKPSDKATLL (158 aa)). 4 residues coordinate Zn(2+): C412, C428, C432, and C435. S489 and S492 each carry phosphoserine. The interaction with POLR2A stretch occupies residues 491–621 (GSGDEGRDEA…ASKDGQLYDM (131 aa)). Disordered stretches follow at residues 518–538 (GKEA…LRDA), 679–795 (TEKL…VPGK), and 822–884 (CSLE…AREP). The residue at position 527 (T527) is a Phosphothreonine. An interaction with RAD51 region spans residues 653–726 (PKRVGAGFSK…APGSRTNCGD (74 aa)). Position 728 is a phosphoserine; by CDK1 (S728). Basic and acidic residues predominate over residues 840–856 (TQAEKRPRPQQESQEKR). The span at 863 to 878 (PSTNSSALASDPSTEN) shows a compositional bias: polar residues.

Belongs to the helicase family. RecQ subfamily. As to quaternary structure, monomer. Interacts with TOP2A, TOP3A and TOP3B. Interacts with RNA polymerase II subunit POLR2A. Identified in a complex with the RNA polymerase II core bound to DNA. Interacts with RAD51. Interacts with WRN; this interaction stimulates WRN helicase activity on DNA fork duplexes. Interacts with MUS1; this interaction promotes MUS81-dependent mitotic DNA synthesis. It depends on Zn(2+) as a cofactor. Post-translationally, phosphorylated by CDK1 at Ser-728; this phosphorylation is required for RECQL5-mediated disruption of RAD51 filaments on stalled replication forks.

It is found in the nucleus. The protein resides in the nucleoplasm. The enzyme catalyses Couples ATP hydrolysis with the unwinding of duplex DNA by translocating in the 3'-5' direction.. It catalyses the reaction ATP + H2O = ADP + phosphate + H(+). In terms of biological role, DNA helicase that plays an important role in DNA replication, transcription and repair. Binds to the RNA polymerase II subunit POLR2A during transcription elongation and suppresses transcription-associated genomic instability. Also associates with POLR1A and enforces the stability of ribosomal DNA arrays. Plays an important role in mitotic chromosome separation after cross-over events and cell cycle progress. Mechanistically, removes RAD51 filaments protecting stalled replication forks at common fragile sites and stimulates MUS81-EME1 endonuclease leading to mitotic DNA synthesis. Required for efficient DNA repair, including repair of inter-strand cross-links. Stimulates DNA decatenation mediated by TOP2A. Prevents sister chromatid exchange and homologous recombination. In Rattus norvegicus (Rat), this protein is ATP-dependent DNA helicase Q5 (Recql5).